The chain runs to 414 residues: Alanine--glyoxylate aminotransferase (414 aa).

A mitochondrion-targeting transit peptide spans 1-23 (MFQALAKASAALGPRAAGWVRTM). Lysine 231 is modified (N6-(pyridoxal phosphate)lysine). N6-acetyllysine occurs at positions 256 and 334. Arginine 382 provides a ligand contact to substrate.

The protein belongs to the class-V pyridoxal-phosphate-dependent aminotransferase family. As to quaternary structure, homodimer. It depends on pyridoxal 5'-phosphate as a cofactor.

It is found in the peroxisome. It localises to the mitochondrion matrix. It carries out the reaction L-serine + pyruvate = 3-hydroxypyruvate + L-alanine. It catalyses the reaction glyoxylate + L-alanine = glycine + pyruvate. In terms of biological role, catalyzes the transamination of glyoxylate to glycine and contributes to the glyoxylate detoxification. Catalyzes the transamination between L-serine and pyruvate and weakly contributes to gluconeogenesis from the L-serine metabolism. In Callithrix jacchus (White-tufted-ear marmoset), this protein is Alanine--glyoxylate aminotransferase.